The following is a 497-amino-acid chain: Guanosine-5'-triphosphate,3'-diphosphate pyrophosphatase (497 aa).

This sequence belongs to the GppA/Ppx family. GppA subfamily.

It catalyses the reaction guanosine 3'-diphosphate 5'-triphosphate + H2O = guanosine 3',5'-bis(diphosphate) + phosphate + H(+). Its pathway is purine metabolism; ppGpp biosynthesis; ppGpp from GTP: step 2/2. Catalyzes the conversion of pppGpp to ppGpp. Guanosine pentaphosphate (pppGpp) is a cytoplasmic signaling molecule which together with ppGpp controls the 'stringent response', an adaptive process that allows bacteria to respond to amino acid starvation, resulting in the coordinated regulation of numerous cellular activities. The sequence is that of Guanosine-5'-triphosphate,3'-diphosphate pyrophosphatase from Vibrio vulnificus (strain YJ016).